Reading from the N-terminus, the 940-residue chain is Lon protease homolog 1, mitochondrial (940 aa).

The N-terminal 61 residues, 1 to 61 (MLKLFTSSAS…AFFCSEPTNG (61 aa)), are a transit peptide targeting the mitochondrion. Residues 70–90 (KAVESDSEVSDSKSSSAIVPT) are disordered. At S74 the chain carries Phosphoserine. The 210-residue stretch at 100-309 (VLALPVPHRP…LTLELMKKEM (210 aa)) folds into the Lon N-terminal domain. An ATP-binding site is contributed by 464–471 (GPPGVGKT). One can recognise a Lon proteolytic domain in the interval 751 to 935 (QTPVGVVMGL…GKIFELAFGY (185 aa)). Residues S841 and K884 contribute to the active site.

It belongs to the peptidase S16 family. As to quaternary structure, homohexamer or homoheptamer. Organized in a ring with a central cavity.

The protein resides in the mitochondrion matrix. It carries out the reaction Hydrolysis of proteins in presence of ATP.. Its function is as follows. ATP-dependent serine protease that mediates the selective degradation of misfolded, unassembled or oxidatively damaged polypeptides as well as certain short-lived regulatory proteins in the mitochondrial matrix. May also have a chaperone function in the assembly of inner membrane protein complexes. Participates in the regulation of mitochondrial gene expression and in the maintenance of the integrity of the mitochondrial genome. Binds to mitochondrial DNA in a site-specific manner. This chain is Lon protease homolog 1, mitochondrial (LON1), found in Arabidopsis thaliana (Mouse-ear cress).